A 207-amino-acid polypeptide reads, in one-letter code: Probable GTP-binding protein EngB (207 aa).

Residues 22–193 enclose the EngB-type G domain; that stretch reads RVPEIVFAGR…LAHFDHYLSG (172 aa). GTP contacts are provided by residues 30 to 37, 57 to 61, 75 to 78, 142 to 145, and 172 to 174; these read GRSNVGKS, GKTRL, DIPG, TKDD, and YSS. S37 and T59 together coordinate Mg(2+).

This sequence belongs to the TRAFAC class TrmE-Era-EngA-EngB-Septin-like GTPase superfamily. EngB GTPase family. The cofactor is Mg(2+).

In terms of biological role, necessary for normal cell division and for the maintenance of normal septation. This Chlorobium luteolum (strain DSM 273 / BCRC 81028 / 2530) (Pelodictyon luteolum) protein is Probable GTP-binding protein EngB.